Reading from the N-terminus, the 759-residue chain is Subtilisin-like protease SBT3.16 (759 aa).

An N-terminal signal peptide occupies residues 1–33 (MELSSLIVPNNKKHFVVVFIGLVLIFKIALITA). Residues 34 to 119 (ANEKSQIYTV…VTRSKNMKLK (86 aa)) constitute a propeptide, activation peptide. Residues 41-118 (YTVHLGERQH…RVTRSKNMKL (78 aa)) enclose the Inhibitor I9 domain. A Peptidase S8 domain is found at 124 to 608 (SDYLGLTSAA…GGLVNPVKVA (485 aa)). The Charge relay system role is filled by Asp-153. 2 N-linked (GlcNAc...) asparagine glycosylation sites follow: Asn-186 and Asn-209. His-229 serves as the catalytic Charge relay system. Asn-371 is a glycosylation site (N-linked (GlcNAc...) asparagine). The active-site Charge relay system is Ser-539. N-linked (GlcNAc...) asparagine glycosylation is found at Asn-632 and Asn-711.

The protein belongs to the peptidase S8 family.

Its subcellular location is the secreted. The protein is Subtilisin-like protease SBT3.16 of Arabidopsis thaliana (Mouse-ear cress).